A 346-amino-acid polypeptide reads, in one-letter code: Carbamoyl phosphate synthase small chain (346 aa).

The tract at residues 1–160 is CPSase; it reads MEDGSVFAGR…SVKEPVLLGE (160 aa). Positions 39, 209, and 211 each coordinate L-glutamine. Positions 164-346 constitute a Glutamine amidotransferase type-1 domain; it reads CIGVVDCGVK…FLKLVERHGH (183 aa). Cys237 functions as the Nucleophile in the catalytic mechanism. Residues Leu238, Gln241, Asn280, Gly282, and Tyr283 each coordinate L-glutamine. Catalysis depends on residues His320 and Glu322.

This sequence belongs to the CarA family. As to quaternary structure, composed of two chains; the small (or glutamine) chain promotes the hydrolysis of glutamine to ammonia, which is used by the large (or ammonia) chain to synthesize carbamoyl phosphate. Tetramer of heterodimers (alpha,beta)4.

It carries out the reaction hydrogencarbonate + L-glutamine + 2 ATP + H2O = carbamoyl phosphate + L-glutamate + 2 ADP + phosphate + 2 H(+). It catalyses the reaction L-glutamine + H2O = L-glutamate + NH4(+). Its pathway is amino-acid biosynthesis; L-arginine biosynthesis; carbamoyl phosphate from bicarbonate: step 1/1. The protein operates within pyrimidine metabolism; UMP biosynthesis via de novo pathway; (S)-dihydroorotate from bicarbonate: step 1/3. Functionally, small subunit of the glutamine-dependent carbamoyl phosphate synthetase (CPSase). CPSase catalyzes the formation of carbamoyl phosphate from the ammonia moiety of glutamine, carbonate, and phosphate donated by ATP, constituting the first step of 2 biosynthetic pathways, one leading to arginine and/or urea and the other to pyrimidine nucleotides. The small subunit (glutamine amidotransferase) binds and cleaves glutamine to supply the large subunit with the substrate ammonia. In Pyrobaculum aerophilum (strain ATCC 51768 / DSM 7523 / JCM 9630 / CIP 104966 / NBRC 100827 / IM2), this protein is Carbamoyl phosphate synthase small chain.